Consider the following 207-residue polypeptide: Large ribosomal subunit protein bL25 (207 aa).

The interval 185 to 207 (DLEEETGEAAAEAEAPAEEGAES) is disordered.

The protein belongs to the bacterial ribosomal protein bL25 family. CTC subfamily. Part of the 50S ribosomal subunit; part of the 5S rRNA/L5/L18/L25 subcomplex. Contacts the 5S rRNA. Binds to the 5S rRNA independently of L5 and L18.

Its function is as follows. This is one of the proteins that binds to the 5S RNA in the ribosome where it forms part of the central protuberance. This Rhodococcus jostii (strain RHA1) protein is Large ribosomal subunit protein bL25.